The chain runs to 672 residues: Cytadherence high molecular weight protein 3 (672 aa).

A run of 25 repeats spans residues 98 to 100 (YDQ), 106 to 108 (YDQ), 160 to 162 (PVV), 197 to 199 (YDQ), 206 to 208 (YDQ), 211 to 213 (YDQ), 221 to 223 (YDQ), 226 to 228 (YDQ), 235 to 237 (YDQ), 249 to 251 (YDQ), 288 to 290 (PVV), 310 to 319 (VEPTPTPVVE), 312 to 315 (PTPT), 316 to 318 (PVV), 322 to 324 (PVV), 330 to 339 (VEPTPTPVVE), 332 to 335 (PTPT), 336 to 338 (PVV), 354 to 358 (PQPTP), 385 to 389 (PTPVP), 396 to 400 (PQPTP), 402 to 404 (PVV), 413 to 415 (PVV), 424 to 428 (PTPAP), and 454 to 456 (PVV). Residues 98–251 (YDQVNNTFYD…NAYNTQNYDQ (154 aa)) are 9 X 3 AA repeats OF Y-D-Q. The interval 160 to 456 (PVVDPDATPE…QTTPAVPPVV (297 aa)) is 8 X 3 AA repeats of P-V-V. A disordered region spans residues 177–197 (GLDPLPQAPDEYQDTTAPPAY). The 2 X 10 AA repeats of V-E-P-T-P-T-P-V-V-E stretch occupies residues 310 to 339 (VEPTPTPVVETAPVVEAPKVVEPTPTPVVE). The tract at residues 312-428 (PTPTPVVETA…PKVVTPTPAP (117 aa)) is 6 X 5 AA repeats of P-X-P-X-P.

The protein resides in the cell projection. The protein localises to the attachment organelle membrane. Functionally, component of the cytoskeleton-like structure which stabilizes the shape of the wall-less mycoplasma. This cytoskeleton-like network of accessory proteins containing HMW proteins 1 to 5 allows the proper anchoring of cytadhesin proteins in the mycoplasmal membrane at the attachment organelle. Essential for successful surface parasitism. In Mycoplasma pneumoniae (strain ATCC 29342 / M129 / Subtype 1) (Mycoplasmoides pneumoniae), this protein is Cytadherence high molecular weight protein 3 (hmw3).